The chain runs to 356 residues: DNA polymerase IV (356 aa).

Positions isoleucine 6–glycine 187 constitute a UmuC domain. Residues aspartate 10 and aspartate 105 each contribute to the Mg(2+) site. The active site involves glutamate 106.

This sequence belongs to the DNA polymerase type-Y family. Monomer. The cofactor is Mg(2+).

The protein resides in the cytoplasm. It carries out the reaction DNA(n) + a 2'-deoxyribonucleoside 5'-triphosphate = DNA(n+1) + diphosphate. In terms of biological role, poorly processive, error-prone DNA polymerase involved in untargeted mutagenesis. Copies undamaged DNA at stalled replication forks, which arise in vivo from mismatched or misaligned primer ends. These misaligned primers can be extended by PolIV. Exhibits no 3'-5' exonuclease (proofreading) activity. May be involved in translesional synthesis, in conjunction with the beta clamp from PolIII. In Staphylococcus saprophyticus subsp. saprophyticus (strain ATCC 15305 / DSM 20229 / NCIMB 8711 / NCTC 7292 / S-41), this protein is DNA polymerase IV.